Consider the following 341-residue polypeptide: Phosphate acyltransferase (341 aa).

The protein belongs to the PlsX family. In terms of assembly, homodimer. Probably interacts with PlsY.

The protein localises to the cytoplasm. It catalyses the reaction a fatty acyl-[ACP] + phosphate = an acyl phosphate + holo-[ACP]. Its pathway is lipid metabolism; phospholipid metabolism. Functionally, catalyzes the reversible formation of acyl-phosphate (acyl-PO(4)) from acyl-[acyl-carrier-protein] (acyl-ACP). This enzyme utilizes acyl-ACP as fatty acyl donor, but not acyl-CoA. The chain is Phosphate acyltransferase from Vibrio vulnificus (strain CMCP6).